Consider the following 109-residue polypeptide: Ribonuclease P protein component (109 aa).

This sequence belongs to the RnpA family. Consists of a catalytic RNA component (M1 or rnpB) and a protein subunit.

It carries out the reaction Endonucleolytic cleavage of RNA, removing 5'-extranucleotides from tRNA precursor.. In terms of biological role, RNaseP catalyzes the removal of the 5'-leader sequence from pre-tRNA to produce the mature 5'-terminus. It can also cleave other RNA substrates such as 4.5S RNA. The protein component plays an auxiliary but essential role in vivo by binding to the 5'-leader sequence and broadening the substrate specificity of the ribozyme. The polypeptide is Ribonuclease P protein component (Nitratiruptor sp. (strain SB155-2)).